The primary structure comprises 470 residues: ATP-dependent protease ATPase subunit HslU (470 aa).

Residues valine 22 and 64–69 (GVGKTE) each bind ATP. Residues 145 to 187 (KKANNNTNSNNPLESLFGGSIPNFGQNNDDEEETPTDEVKTKR) are disordered. 3 residues coordinate ATP: aspartate 283, glutamate 348, and arginine 420.

This sequence belongs to the ClpX chaperone family. HslU subfamily. A double ring-shaped homohexamer of HslV is capped on each side by a ring-shaped HslU homohexamer. The assembly of the HslU/HslV complex is dependent on binding of ATP.

The protein localises to the cytoplasm. In terms of biological role, ATPase subunit of a proteasome-like degradation complex; this subunit has chaperone activity. The binding of ATP and its subsequent hydrolysis by HslU are essential for unfolding of protein substrates subsequently hydrolyzed by HslV. HslU recognizes the N-terminal part of its protein substrates and unfolds these before they are guided to HslV for hydrolysis. This is ATP-dependent protease ATPase subunit HslU from Staphylococcus saprophyticus subsp. saprophyticus (strain ATCC 15305 / DSM 20229 / NCIMB 8711 / NCTC 7292 / S-41).